Consider the following 289-residue polypeptide: Phosphatidylserine decarboxylase proenzyme (289 aa).

Active-site charge relay system; for autoendoproteolytic cleavage activity residues include aspartate 92, histidine 149, and serine 254. The active-site Schiff-base intermediate with substrate; via pyruvic acid; for decarboxylase activity is the serine 254. The residue at position 254 (serine 254) is a Pyruvic acid (Ser); by autocatalysis.

The protein belongs to the phosphatidylserine decarboxylase family. PSD-B subfamily. Prokaryotic type I sub-subfamily. Heterodimer of a large membrane-associated beta subunit and a small pyruvoyl-containing alpha subunit. Pyruvate is required as a cofactor. In terms of processing, is synthesized initially as an inactive proenzyme. Formation of the active enzyme involves a self-maturation process in which the active site pyruvoyl group is generated from an internal serine residue via an autocatalytic post-translational modification. Two non-identical subunits are generated from the proenzyme in this reaction, and the pyruvate is formed at the N-terminus of the alpha chain, which is derived from the carboxyl end of the proenzyme. The autoendoproteolytic cleavage occurs by a canonical serine protease mechanism, in which the side chain hydroxyl group of the serine supplies its oxygen atom to form the C-terminus of the beta chain, while the remainder of the serine residue undergoes an oxidative deamination to produce ammonia and the pyruvoyl prosthetic group on the alpha chain. During this reaction, the Ser that is part of the protease active site of the proenzyme becomes the pyruvoyl prosthetic group, which constitutes an essential element of the active site of the mature decarboxylase.

Its subcellular location is the cell membrane. It carries out the reaction a 1,2-diacyl-sn-glycero-3-phospho-L-serine + H(+) = a 1,2-diacyl-sn-glycero-3-phosphoethanolamine + CO2. It participates in phospholipid metabolism; phosphatidylethanolamine biosynthesis; phosphatidylethanolamine from CDP-diacylglycerol: step 2/2. In terms of biological role, catalyzes the formation of phosphatidylethanolamine (PtdEtn) from phosphatidylserine (PtdSer). This is Phosphatidylserine decarboxylase proenzyme from Pseudomonas aeruginosa (strain UCBPP-PA14).